Consider the following 135-residue polypeptide: MLSPKRTRFRKQHRGRMKGISYRGNRICFGKFALQALEPAWITSRQIEAGRRAMTRNVRRGGKIWVRIFPDKPITARPAETRMGSGKGSPEYWVAVVKPGRILYEMGGVTEHIARRAISIAASKMPIRTQFIISR.

This sequence belongs to the universal ribosomal protein uL16 family. Part of the 50S ribosomal subunit.

The protein resides in the plastid. The protein localises to the chloroplast. In Coffea arabica (Arabian coffee), this protein is Large ribosomal subunit protein uL16c.